The chain runs to 96 residues: Co-chaperonin GroES (96 aa).

It belongs to the GroES chaperonin family. Heptamer of 7 subunits arranged in a ring. Interacts with the chaperonin GroEL.

It is found in the cytoplasm. In terms of biological role, together with the chaperonin GroEL, plays an essential role in assisting protein folding. The GroEL-GroES system forms a nano-cage that allows encapsulation of the non-native substrate proteins and provides a physical environment optimized to promote and accelerate protein folding. GroES binds to the apical surface of the GroEL ring, thereby capping the opening of the GroEL channel. The polypeptide is Co-chaperonin GroES (Buchnera aphidicola subsp. Myzus persicae (Myzus persicae primary endosymbiont)).